The primary structure comprises 585 residues: MGRKLLGLLMLAVLLAGCAGVPSSSAPQAIGTVERPAPSNLPKPTPGMDPDVLLREFLKATADPANRHLAARQFLTQSASNAWDDAGSALLIDHVVFVETRAAERVSATMRADILGSLSDMGVFETAEGVLPDPGPIELVKTSGGWRIDRLPNGVFLDWQQFQATYKRNTLYFADPTGKTVVPDPRYVAVPDHDQLATELVSKLIAGPRPEMAHTVRNLLAPPLRLRGPVTRADGGKSGIGRGYGGARIDLEKLSTTDPHSRQLVAAQIIWTLARADIRGPYVINADGAPLDDRFRDGWTTSDVAATDPGVADGAGAGLHALVNGSLVSLDGQHTVVVPGAFGRMGDQTGAALSRNGRQVASVVTLHRGAPDMAASLWIGDLGAEAVQSADGHSLSRPTWSLDDVVWVVVDGNNVLRAIQEPASGQPARLPVDSVAVATRFPGPITDLQLSRDSTRAAMVIGGQVILASVEQTQAGQYALTYPRRLGFGLGNSVVSLSWRTGDDIVVTRTDSSHPVSYVNLDGVNSDAPPHGVQMPVTTVVANPSTAYVAGPQGVLQYSPSADGQQGWSEVPGLTVPGAAPVLPG.

Residues 1-17 form the signal peptide; it reads MGRKLLGLLMLAVLLAG. Residue cysteine 18 is the site of N-palmitoyl cysteine attachment. Residue cysteine 18 is the site of S-diacylglycerol cysteine attachment. 2 disordered regions span residues 24–48 and 560–585; these read SSAP…TPGM and PSAD…VLPG.

The protein belongs to the LpqB lipoprotein family.

The protein resides in the cell membrane. In Mycolicibacterium paratuberculosis (strain ATCC BAA-968 / K-10) (Mycobacterium paratuberculosis), this protein is Lipoprotein LpqB.